The sequence spans 340 residues: MLVVVARKSSSSARVAAHQTRSHRAAMPAGQPHAHEPDGGGASHRRPQSPPSLPAEVVPAFAPPESEDEESWVWSQIKAEARRDADAEPALASFLYATVLSHPSLPRSISFHLANKLCSSTLLSTLLYDLFLASFTAHPSLRAAVVADLLAARSRDPACVGFSQCLLNFKGFLAIQAHRVSHVLWAQQRRPLALALQSRVADVFAVDIHPAAVVGKGILLDHATGVVIGETAVVGDNVSILHHVTLGGTGKAVGDRHPKIGDGVLIGAGATILGNVKIGAGAKIGAGSVVLIDVPARNTAVGNPARLIGRKNGEVEKDEDMPGESMDHTSFIRQWSDYTI.

2 stretches are compositionally biased toward low complexity: residues Met1–Ala17 and Pro54–Pro64. Residues Met1 to Glu67 are disordered.

It belongs to the transferase hexapeptide repeat family. In terms of assembly, homomultimer.

It catalyses the reaction L-serine + acetyl-CoA = O-acetyl-L-serine + CoA. It functions in the pathway amino-acid biosynthesis; L-cysteine biosynthesis; L-cysteine from L-serine: step 1/2. This Oryza sativa subsp. japonica (Rice) protein is Probable serine acetyltransferase 5 (SAT5).